The chain runs to 132 residues: UPF0102 protein LI0223 (132 aa).

Belongs to the UPF0102 family.

This chain is UPF0102 protein LI0223, found in Lawsonia intracellularis (strain PHE/MN1-00).